The following is a 254-amino-acid chain: MKYEEINFKVPVESPYYPNYSQCVIERIYSILRNQKDMGDDRIIINTNLKKGLPLENINKIAGPMIEAWAEEVFSGIRDNRDNQYNLINVEAQERLGISDIILQFQVNNNVITGNVDVKATSNDIPDSGKSPNITSFSRIRTAYVKDPNFIFIILSIKHSVYVKRNEYTNLMDGIMQIIDFNVYDLKYISDSDISYNPALGTGQIQIKDIHYVSSQKRTTWQMCQLLDLKYLRSKKRTIEQFYNEAKRNKWIKD.

It carries out the reaction Endonucleolytic cleavage of DNA to give specific double-stranded fragments with terminal 5'-phosphates.. A P subtype restriction enzyme that recognizes the double-stranded sequence 5'-GTTAAC-3' and cleaves after T-3. The chain is Type II restriction enzyme HpaI (hpaIR) from Haemophilus parainfluenzae.